The primary structure comprises 170 residues: Adenine phosphoribosyltransferase (170 aa).

The protein belongs to the purine/pyrimidine phosphoribosyltransferase family. Homodimer.

The protein resides in the cytoplasm. The enzyme catalyses AMP + diphosphate = 5-phospho-alpha-D-ribose 1-diphosphate + adenine. Its pathway is purine metabolism; AMP biosynthesis via salvage pathway; AMP from adenine: step 1/1. Its function is as follows. Catalyzes a salvage reaction resulting in the formation of AMP, that is energically less costly than de novo synthesis. This is Adenine phosphoribosyltransferase from Alkaliphilus metalliredigens (strain QYMF).